Reading from the N-terminus, the 243-residue chain is MLPFWIALQFLGSLPIRLPGMPRPAELGRSLLFYPLVGVVFGTLLLGFNALLSGAPLLLHAALLLSAWVLLSGGLHLDGLADSADAWLGGFGDRERTLNIMKDPRSGPIAVVTLVVVLLLKFAAIVALIESHNSIGLLLAPLIGRSAMLALFLGTPYVRSGGLGQALADHLPRSLGRKVLLVSTVACVVLAGWSGIAALLVCAVCFYWLRHMMMRRLGGSTGDTAGALLELLELAVVLTLALL.

Transmembrane regions (helical) follow at residues 31–51, 55–75, 109–129, 135–155, and 188–208; these read LLFY…FNAL, APLL…SGGL, IAVV…VALI, IGLL…FLGT, and VVLA…CFYW.

This sequence belongs to the CobS family. It depends on Mg(2+) as a cofactor.

It localises to the cell inner membrane. The enzyme catalyses alpha-ribazole + adenosylcob(III)inamide-GDP = adenosylcob(III)alamin + GMP + H(+). It catalyses the reaction alpha-ribazole 5'-phosphate + adenosylcob(III)inamide-GDP = adenosylcob(III)alamin 5'-phosphate + GMP + H(+). It participates in cofactor biosynthesis; adenosylcobalamin biosynthesis; adenosylcobalamin from cob(II)yrinate a,c-diamide: step 7/7. Functionally, joins adenosylcobinamide-GDP and alpha-ribazole to generate adenosylcobalamin (Ado-cobalamin). Also synthesizes adenosylcobalamin 5'-phosphate from adenosylcobinamide-GDP and alpha-ribazole 5'-phosphate. The sequence is that of Adenosylcobinamide-GDP ribazoletransferase from Pseudomonas syringae pv. tomato (strain ATCC BAA-871 / DC3000).